We begin with the raw amino-acid sequence, 83 residues long: FMRFamide-like neuropeptide 23 (83 aa).

Residues 1 to 24 form the signal peptide; the sequence is MLLPKISILLYILVVLQETAAVRG. Positions 25–36 are excised as a propeptide; that stretch reads ALFRSGRAVPFE. F47 carries the phenylalanine amide modification. Residues 50 to 83 constitute a propeptide that is removed on maturation; the sequence is AGMASGVGGGSEGGPDDVKNSYIRVNGEPEIVYQ.

This sequence belongs to the FARP (FMRFamide related peptide) family. In terms of tissue distribution, each flp gene is expressed in a distinct set of neurons.

It is found in the secreted. Functionally, FMRFamides and FMRFamide-like peptides are neuropeptides. The protein is FMRFamide-like neuropeptide 23 (flp-23) of Caenorhabditis elegans.